The sequence spans 378 residues: Putative gustatory receptor 22f (378 aa).

The Cytoplasmic portion of the chain corresponds to 1 to 13 (MKMFQPRRGFSCH). Residues 14–34 (LAWFMLQTTLYASWLLGLFPF) traverse the membrane as a helical segment. Residues 35–48 (TFDSRRKQLKRSRW) lie on the Extracellular side of the membrane. The chain crosses the membrane as a helical span at residues 49-69 (LLLYGFVLHSLAMCLAMSSHL). Over 70–88 (ASKQRRKYNAFERNPLLEK) the chain is Cytoplasmic. The helical transmembrane segment at 89-109 (IYMQFQVTTFFTISVLLLMNV) threads the bilayer. Topologically, residues 110-143 (WKSNTVRKIANELLTLEGQVKDLLTLKNCPNFNC) are extracellular. A helical transmembrane segment spans residues 144 to 164 (FVIKKHVAAIGQFVISIYFCL). At 165–178 (CQENSYPKILKILC) the chain is on the cytoplasmic side. A helical transmembrane segment spans residues 179-199 (CLPSVGLQLIIMHFHTEIILV). Topologically, residues 200 to 245 (YRYVWLVNETLEDSHHLSSSRIHALASLYDRLLKLSELVVACNDLQ) are extracellular. N207 carries N-linked (GlcNAc...) asparagine glycosylation. Residues 246–266 (LILMLIIYLIGNTVQIFFLIV) form a helical membrane-spanning segment. Topologically, residues 267 to 354 (LGVSMNKRYI…LCGLFSINHN (88 aa)) are cytoplasmic. The chain crosses the membrane as a helical span at residues 355-375 (MGFQMIITSFLYLVYLLQFDF). Residues 376–378 (MNL) lie on the Extracellular side of the membrane.

This sequence belongs to the insect chemoreceptor superfamily. Gustatory receptor (GR) family. Gr22e subfamily. As to expression, taste bristles in the foreleg and labial palps.

It is found in the cell membrane. Probable gustatory receptor which mediates acceptance or avoidance behavior, depending on its substrates. The polypeptide is Putative gustatory receptor 22f (Gr22f) (Drosophila melanogaster (Fruit fly)).